A 165-amino-acid polypeptide reads, in one-letter code: Myosin regulatory light chain 2, ventricular/cardiac muscle isoform (165 aa).

S2 is modified (n,N,N-trimethylserine). Position 14 is a deamidated asparagine (N14). S15 and S19 each carry phosphoserine. 3 consecutive EF-hand domains span residues 24–59 (TQIQEFKEAFTIMDQNRDGFIDKNDLRDTFAALGRV), 94–129 (DPEETILNAFKVFDPEGKGVLKADYVREMLTTQAER), and 130–165 (FSKDEIDQMFAAFPPDVTGNLDYKNLVHIITHGEEK). Residues D37, N39, D41, and D48 each coordinate Ca(2+). The residue at position 52 (T52) is a Phosphothreonine.

As to quaternary structure, myosin is a hexamer of 2 heavy chains and 4 light chains. Interacts with MYOC. In terms of processing, N-terminus is methylated by METTL11A/NTM1. Post-translationally, phosphorylated by MYLK3 and MYLK2; promotes cardiac muscle contraction and function. Dephosphorylated by PPP1CB complexed to PPP1R12B. The phosphorylated form in adult is expressed as gradients across the heart from endocardium (low phosphorylation) to epicardium (high phosphorylation); regulates cardiac torsion and workload distribution.

The protein resides in the cytoplasm. The protein localises to the myofibril. It is found in the sarcomere. It localises to the a band. Functionally, contractile protein that plays a role in heart development and function. Following phosphorylation, plays a role in cross-bridge cycling kinetics and cardiac muscle contraction by increasing myosin lever arm stiffness and promoting myosin head diffusion; as a consequence of the increase in maximum contraction force and calcium sensitivity of contraction force. These events altogether slow down myosin kinetics and prolong duty cycle resulting in accumulated myosins being cooperatively recruited to actin binding sites to sustain thin filament activation as a means to fine-tune myofilament calcium sensitivity to force. During cardiogenesis plays an early role in cardiac contractility by promoting cardiac myofibril assembly. In Oryctolagus cuniculus (Rabbit), this protein is Myosin regulatory light chain 2, ventricular/cardiac muscle isoform.